The chain runs to 354 residues: G protein alpha o subunit (354 aa).

The N-myristoyl glycine moiety is linked to residue Gly2. The S-palmitoyl cysteine moiety is linked to residue Cys3. One can recognise a G-alpha domain in the interval 32–354 (KDIKLLLLGA…ANNLRGCGLY (323 aa)). A G1 motif region spans residues 35 to 48 (KLLLLGAGESGKST). Residues 40–47 (GAGESGKS), 176–182 (LRTRVKT), 201–205 (DVGGQ), 270–273 (NKKD), and Ala326 each bind GTP. Mg(2+) is bound by residues Ser47 and Thr182. Positions 174 to 182 (DILRTRVKT) are G2 motif. The G3 motif stretch occupies residues 197–206 (FKLFDVGGQR). The interval 266–273 (ILFLNKKD) is G4 motif. Residues 324 to 329 (TCATDT) are G5 motif.

The protein belongs to the G-alpha family. G(i/o/t/z) subfamily. G proteins are composed of 3 units; alpha, beta and gamma. The alpha chain contains the guanine nucleotide binding site. Expressed primarily in neuronal cell bodies in the brain, optic lobe, and thoracic and abdominal ganglia. Also expressed in antenna, oocytes and ovarian nurse cells.

In terms of biological role, guanine nucleotide-binding proteins (G proteins) are involved as modulators or transducers in various transmembrane signaling systems. Plays a role in glial cell differentiation during embryogenesis; loco, Galphai and the G-protein coupled receptor, moody, are required in the surface glia to achieve effective insulation of the nerve cord. The protein is G protein alpha o subunit (Galphao) of Drosophila melanogaster (Fruit fly).